We begin with the raw amino-acid sequence, 85 residues long: Elongation factor 1-beta (85 aa).

The protein belongs to the EF-1-beta/EF-1-delta family.

Promotes the exchange of GDP for GTP in EF-1-alpha/GDP, thus allowing the regeneration of EF-1-alpha/GTP that could then be used to form the ternary complex EF-1-alpha/GTP/AAtRNA. In Methanoregula boonei (strain DSM 21154 / JCM 14090 / 6A8), this protein is Elongation factor 1-beta.